The sequence spans 334 residues: Ketol-acid reductoisomerase (NADP(+)) (334 aa).

A KARI N-terminal Rossmann domain is found at 2–181 (TKVYYDETVT…GATRAGVIET (180 aa)). Residues 25–28 (YGSQ), Arg-48, Ser-52, and 82–85 (DEIQ) each bind NADP(+). His-107 is an active-site residue. Gly-133 provides a ligand contact to NADP(+). The KARI C-terminal knotted domain maps to 182-327 (TFKEETETDL…RELREMMPFI (146 aa)). Mg(2+) contacts are provided by Asp-190, Glu-194, Glu-226, and Glu-230. Residue Ser-251 coordinates substrate.

The protein belongs to the ketol-acid reductoisomerase family. Mg(2+) is required as a cofactor.

The catalysed reaction is (2R)-2,3-dihydroxy-3-methylbutanoate + NADP(+) = (2S)-2-acetolactate + NADPH + H(+). The enzyme catalyses (2R,3R)-2,3-dihydroxy-3-methylpentanoate + NADP(+) = (S)-2-ethyl-2-hydroxy-3-oxobutanoate + NADPH + H(+). Its pathway is amino-acid biosynthesis; L-isoleucine biosynthesis; L-isoleucine from 2-oxobutanoate: step 2/4. It participates in amino-acid biosynthesis; L-valine biosynthesis; L-valine from pyruvate: step 2/4. In terms of biological role, involved in the biosynthesis of branched-chain amino acids (BCAA). Catalyzes an alkyl-migration followed by a ketol-acid reduction of (S)-2-acetolactate (S2AL) to yield (R)-2,3-dihydroxy-isovalerate. In the isomerase reaction, S2AL is rearranged via a Mg-dependent methyl migration to produce 3-hydroxy-3-methyl-2-ketobutyrate (HMKB). In the reductase reaction, this 2-ketoacid undergoes a metal-dependent reduction by NADPH to yield (R)-2,3-dihydroxy-isovalerate. This chain is Ketol-acid reductoisomerase (NADP(+)), found in Staphylococcus epidermidis (strain ATCC 35984 / DSM 28319 / BCRC 17069 / CCUG 31568 / BM 3577 / RP62A).